A 414-amino-acid polypeptide reads, in one-letter code: Enolase (414 aa).

Gln-162 is a binding site for (2R)-2-phosphoglycerate. The Proton donor role is filled by Glu-204. Residues Asp-239, Glu-280, and Asp-307 each coordinate Mg(2+). Lys-332, Arg-361, Ser-362, and Lys-383 together coordinate (2R)-2-phosphoglycerate. Catalysis depends on Lys-332, which acts as the Proton acceptor.

Belongs to the enolase family. It depends on Mg(2+) as a cofactor.

Its subcellular location is the cytoplasm. It localises to the secreted. The protein resides in the cell surface. It catalyses the reaction (2R)-2-phosphoglycerate = phosphoenolpyruvate + H2O. It functions in the pathway carbohydrate degradation; glycolysis; pyruvate from D-glyceraldehyde 3-phosphate: step 4/5. Its function is as follows. Catalyzes the reversible conversion of 2-phosphoglycerate (2-PG) into phosphoenolpyruvate (PEP). It is essential for the degradation of carbohydrates via glycolysis. The polypeptide is Enolase (Campylobacter jejuni (strain RM1221)).